We begin with the raw amino-acid sequence, 137 residues long: Nuclear transition protein 2 (137 aa).

Polar residues predominate over residues 1–21 (MDTKTQSLPNAHTQPHSNSGP). The interval 1 to 137 (MDTKTQSLPN…KRRSSGRKYN (137 aa)) is disordered. Zn(2+) contacts are provided by histidine 12, histidine 16, histidine 24, cysteine 29, cysteine 31, cysteine 35, and cysteine 38. Positions 22–74 (QSHACNQCSCSHHCQNCSQSCDRSQSCSRSRSSSQSPTGHRSLPGHQSQSLSP) are enriched in low complexity. The span at 78-91 (PRHRKRAMHSHRCP) shows a compositional bias: basic residues. Residues 110-118 (GKANKRKGI) carry the Nuclear localization signal motif. Basic residues predominate over residues 126-137 (KTKRRSSGRKYN). Phosphoserine is present on serine 132.

It belongs to the nuclear transition protein 2 family. As to expression, testis. Expression is restricted to haploid germ cells.

Its subcellular location is the nucleus. The protein localises to the nucleolus. The protein resides in the chromosome. Its function is as follows. Plays a key role in the replacement of histones to protamine in the elongating spermatids of mammals. In condensing spermatids, loaded onto the nucleosomes, where it promotes the recruitment and processing of protamines, which are responsible for histone eviction. This Sus scrofa (Pig) protein is Nuclear transition protein 2 (TNP2).